Reading from the N-terminus, the 478-residue chain is Probable cytosolic Fe-S cluster assembly factor AAEL012261 (478 aa).

[4Fe-4S] cluster contacts are provided by cysteine 23, cysteine 69, cysteine 72, cysteine 75, cysteine 189, cysteine 245, cysteine 396, and cysteine 400.

It belongs to the NARF family.

In terms of biological role, component of the cytosolic iron-sulfur (Fe/S) protein assembly machinery. Required for maturation of extramitochondrial Fe/S proteins. This chain is Probable cytosolic Fe-S cluster assembly factor AAEL012261, found in Aedes aegypti (Yellowfever mosquito).